A 186-amino-acid polypeptide reads, in one-letter code: Probable RNA 2'-phosphotransferase (186 aa).

This sequence belongs to the KptA/TPT1 family.

Its function is as follows. Removes the 2'-phosphate from RNA via an intermediate in which the phosphate is ADP-ribosylated by NAD followed by a presumed transesterification to release the RNA and generate ADP-ribose 1''-2''-cyclic phosphate (APPR&gt;P). May function as an ADP-ribosylase. The protein is Probable RNA 2'-phosphotransferase of Hahella chejuensis (strain KCTC 2396).